A 231-amino-acid chain; its full sequence is L-ribulose-5-phosphate 4-epimerase AraD (231 aa).

Substrate contacts are provided by residues 27 to 28, 44 to 45, and 74 to 75; these read GN, SG, and SS. Positions 76, 95, and 97 each coordinate Zn(2+). Catalysis depends on Asp120, which acts as the Proton donor/acceptor. His171 lines the Zn(2+) pocket. The active-site Proton donor/acceptor is Tyr229.

The protein belongs to the aldolase class II family. AraD/FucA subfamily. In terms of assembly, homotetramer. Zn(2+) is required as a cofactor.

The catalysed reaction is L-ribulose 5-phosphate = D-xylulose 5-phosphate. It functions in the pathway carbohydrate degradation; L-arabinose degradation via L-ribulose; D-xylulose 5-phosphate from L-arabinose (bacterial route): step 3/3. With respect to regulation, inhibited by glycolohydroxamate at concentration above 0.1 mM. Involved in the degradation of L-arabinose. Catalyzes the interconversion of L-ribulose 5-phosphate (LRu5P) and D-xylulose 5-phosphate (D-Xu5P) via a retroaldol/aldol mechanism (carbon-carbon bond cleavage analogous to a class II aldolase reaction). In Escherichia coli (strain K12), this protein is L-ribulose-5-phosphate 4-epimerase AraD.